A 480-amino-acid chain; its full sequence is Ribulose bisphosphate carboxylase large chain (480 aa).

Positions 1–2 (MS) are excised as a propeptide. Residue proline 3 is modified to N-acetylproline. Lysine 14 is modified (N6,N6,N6-trimethyllysine). Residues asparagine 123 and threonine 173 each contribute to the substrate site. Lysine 175 functions as the Proton acceptor in the catalytic mechanism. Lysine 177 provides a ligand contact to substrate. Positions 201, 203, and 204 each coordinate Mg(2+). Lysine 201 is modified (N6-carboxylysine). Histidine 294 functions as the Proton acceptor in the catalytic mechanism. Arginine 295, histidine 327, and serine 379 together coordinate substrate.

The protein belongs to the RuBisCO large chain family. Type I subfamily. Heterohexadecamer of 8 large chains and 8 small chains; disulfide-linked. The disulfide link is formed within the large subunit homodimers. It depends on Mg(2+) as a cofactor. The disulfide bond which can form in the large chain dimeric partners within the hexadecamer appears to be associated with oxidative stress and protein turnover.

The protein localises to the plastid. It localises to the chloroplast. It catalyses the reaction 2 (2R)-3-phosphoglycerate + 2 H(+) = D-ribulose 1,5-bisphosphate + CO2 + H2O. The enzyme catalyses D-ribulose 1,5-bisphosphate + O2 = 2-phosphoglycolate + (2R)-3-phosphoglycerate + 2 H(+). Its function is as follows. RuBisCO catalyzes two reactions: the carboxylation of D-ribulose 1,5-bisphosphate, the primary event in carbon dioxide fixation, as well as the oxidative fragmentation of the pentose substrate in the photorespiration process. Both reactions occur simultaneously and in competition at the same active site. The protein is Ribulose bisphosphate carboxylase large chain of Alluaudia procera (Madagascan ocotillo).